A 291-amino-acid polypeptide reads, in one-letter code: 33 kDa chaperonin (291 aa).

2 cysteine pairs are disulfide-bonded: cysteine 235-cysteine 237 and cysteine 268-cysteine 271.

It belongs to the HSP33 family. Under oxidizing conditions two disulfide bonds are formed involving the reactive cysteines. Under reducing conditions zinc is bound to the reactive cysteines and the protein is inactive.

It localises to the cytoplasm. Redox regulated molecular chaperone. Protects both thermally unfolding and oxidatively damaged proteins from irreversible aggregation. Plays an important role in the bacterial defense system toward oxidative stress. The protein is 33 kDa chaperonin of Bacillus pumilus (strain SAFR-032).